The chain runs to 302 residues: tRNA pseudouridine synthase B (302 aa).

D45 (nucleophile) is an active-site residue.

The protein belongs to the pseudouridine synthase TruB family. Type 1 subfamily.

The enzyme catalyses uridine(55) in tRNA = pseudouridine(55) in tRNA. In terms of biological role, responsible for synthesis of pseudouridine from uracil-55 in the psi GC loop of transfer RNAs. This Francisella tularensis subsp. tularensis (strain WY96-3418) protein is tRNA pseudouridine synthase B.